Here is a 302-residue protein sequence, read N- to C-terminus: Deoxyhypusine hydroxylase (302 aa).

HEAT-like PBS-type repeat units lie at residues 23–49, 54–80, 87–113, 175–201, 206–232, and 239–265; these read ERFR…AFDD, LKHE…VLKD, VRHE…YKQD, DRYR…GLKD, FRHE…NLED, and VRHE…YAED. The Fe cation site is built by H56, E57, H89, and E90. 4 residues coordinate Fe cation: H208, E209, H241, and E242.

This sequence belongs to the deoxyhypusine hydroxylase family. Fe(2+) serves as cofactor.

It is found in the endoplasmic reticulum membrane. The enzyme catalyses [eIF5A protein]-deoxyhypusine + AH2 + O2 = [eIF5A protein]-hypusine + A + H2O. Its pathway is protein modification; eIF5A hypusination. In terms of biological role, catalyzes the hydroxylation of the N(6)-(4-aminobutyl)-L-lysine intermediate to form hypusine, an essential post-translational modification only found in mature eIF-5A factor. Essential for organismal viability and plays a role in a wide number of important processes such as cell growth and proliferation, and regulates induction of autophagy and protein synthesis. Has a role in eIF-5A-mediated translational control. In Drosophila melanogaster (Fruit fly), this protein is Deoxyhypusine hydroxylase.